We begin with the raw amino-acid sequence, 304 residues long: KIN17-like protein (304 aa).

The C2H2-type zinc-finger motif lies at 26–50 (WYCSACQKQMRDENGFKCHTQSEGH). Disordered regions lie at residues 204–228 (IDLS…SAQN) and 261–291 (LNKS…DIIA).

This sequence belongs to the KIN17 family.

Its subcellular location is the nucleus. The protein localises to the nucleolus. The protein is KIN17-like protein of Schizosaccharomyces pombe (strain 972 / ATCC 24843) (Fission yeast).